Consider the following 196-residue polypeptide: Probable malonic semialdehyde reductase RutE (196 aa).

Belongs to the nitroreductase family. HadB/RutE subfamily. It depends on FMN as a cofactor.

It catalyses the reaction 3-hydroxypropanoate + NADP(+) = 3-oxopropanoate + NADPH + H(+). In terms of biological role, may reduce toxic product malonic semialdehyde to 3-hydroxypropionic acid, which is excreted. This chain is Probable malonic semialdehyde reductase RutE, found in Escherichia coli O7:K1 (strain IAI39 / ExPEC).